The sequence spans 319 residues: Ester hydrolase C11orf54 homolog (319 aa).

Zn(2+)-binding residues include H270, H272, and H282.

In terms of assembly, monomer. Zn(2+) serves as cofactor.

The protein resides in the nucleus. It is found in the cytoplasm. Exhibits ester hydrolase activity on the substrate p-nitrophenyl acetate, in vitro. May regulate DNA damage and repair by regulating HIF1A degradation via chaperone-mediated autophagy (CMA). This is Ester hydrolase C11orf54 homolog from Danio rerio (Zebrafish).